The chain runs to 589 residues: MACSYILTPNPTKLNLSFAPSDLDAPSPSSSVSFTNTKPRRRKLSANSVSDTPNLLNFPNYPSPNPIIPEKDTSRWNPLQRAASAALDFAETALLRRERSKPLPKTVDPRHQISGNYAPVPEQSVKSSLSVDGKIPDCIDGVYLRNGANPLFEPVSGHHLFDGDGMVHAVKITNGDASYSCRFTETERLVQEKQLGSPIFPKAIGELHGHSGIARLMLFYARGLFGLLNHKNGTGVANAGLVYFHDRLLAMSEDDLPYQVRVTDNGDLETIGRFDFDGQLSSAMIAHPKIDPVTKELFALSYDVVKKPYLKYFKFSPEGEKSPDVEIPLASPTMMHDFAITENFVVIPDQQVVFKLSDMFLGKSPVKYDGEKISRFGILPRNAKDASEMVWVESPETFCFHLWNAWESPETDEVVVIGSCMTPADSIFNECDEQLNSVLSEIRLNLKTGKSTRRTIIPGSVQMNLEAGMVNRNLLGRKTRYAYLAIAEPWPKVSGFAKVDLSTGEVKNHFYGGKKYGGEPFFLPRGLESDGEDDGYIMSFVHDEESWESELHIVNAVTLELEATVKLPSRVPYGFHGTFVNSADMLNQA.

Residues 1-45 (MACSYILTPNPTKLNLSFAPSDLDAPSPSSSVSFTNTKPRRRKLS) constitute a chloroplast transit peptide. The span at 21 to 34 (SDLDAPSPSSSVSF) shows a compositional bias: low complexity. Positions 21–51 (SDLDAPSPSSSVSFTNTKPRRRKLSANSVSD) are disordered. Residues H287, H336, H401, and H576 each contribute to the Fe cation site.

The protein belongs to the carotenoid oxygenase family. In terms of assembly, interacts in vitro with VAR3. The cofactor is Fe(2+). Detected only in seeds.

It is found in the plastid. The protein localises to the chloroplast thylakoid membrane. The enzyme catalyses a 9-cis-epoxycarotenoid + O2 = a 12'-apo-carotenal + 2-cis,4-trans-xanthoxin. It catalyses the reaction 9-cis-violaxanthin + O2 = (3S,5R,6S)-5,6-epoxy-3-hydroxy-5,6-dihydro-12'-apo-beta-caroten-12'-al + 2-cis,4-trans-xanthoxin. The catalysed reaction is 9'-cis-neoxanthin + O2 = (3S,5R,6R)-3,5-dihydroxy-6,7-didehydro-5,6-dihydro-12'-apo-beta-caroten-12'-al + 2-cis,4-trans-xanthoxin. Functionally, has a 11,12(11',12') 9-cis epoxycarotenoid cleavage activity. Catalyzes the first step of abscisic-acid biosynthesis from carotenoids. This is Probable 9-cis-epoxycarotenoid dioxygenase NCED5, chloroplastic (NCED5) from Arabidopsis thaliana (Mouse-ear cress).